A 365-amino-acid polypeptide reads, in one-letter code: Carbamoyl phosphate synthase small chain (365 aa).

CPSase stretches follow at residues methionine 1–glycine 166 and methionine 1–histidine 169. L-glutamine is bound by residues serine 45, glycine 218, and glycine 220. One can recognise a Glutamine amidotransferase type-1 domain in the interval arginine 170 to glutamate 357. The active-site Nucleophile is cysteine 245. The L-glutamine site is built by leucine 246, glutamine 249, asparagine 287, glycine 289, and tyrosine 290. Active-site residues include histidine 330 and glutamate 332.

This sequence belongs to the CarA family. In terms of assembly, composed of two chains; the small (or glutamine) chain promotes the hydrolysis of glutamine to ammonia, which is used by the large (or ammonia) chain to synthesize carbamoyl phosphate. Tetramer of heterodimers (alpha,beta)4.

The catalysed reaction is hydrogencarbonate + L-glutamine + 2 ATP + H2O = carbamoyl phosphate + L-glutamate + 2 ADP + phosphate + 2 H(+). It catalyses the reaction L-glutamine + H2O = L-glutamate + NH4(+). Its pathway is amino-acid biosynthesis; L-arginine biosynthesis; carbamoyl phosphate from bicarbonate: step 1/1. The protein operates within pyrimidine metabolism; UMP biosynthesis via de novo pathway; (S)-dihydroorotate from bicarbonate: step 1/3. Its function is as follows. Small subunit of the glutamine-dependent carbamoyl phosphate synthetase (CPSase). CPSase catalyzes the formation of carbamoyl phosphate from the ammonia moiety of glutamine, carbonate, and phosphate donated by ATP, constituting the first step of 2 biosynthetic pathways, one leading to arginine and/or urea and the other to pyrimidine nucleotides. The small subunit (glutamine amidotransferase) binds and cleaves glutamine to supply the large subunit with the substrate ammonia. The protein is Carbamoyl phosphate synthase small chain of Bacillus cereus (strain ATCC 14579 / DSM 31 / CCUG 7414 / JCM 2152 / NBRC 15305 / NCIMB 9373 / NCTC 2599 / NRRL B-3711).